The sequence spans 192 residues: UPF0312 protein plu2095 (192 aa).

The first 23 residues, 1–23 (MLKKTLLGLTAGALLLNASSALA), serve as a signal peptide directing secretion.

Belongs to the UPF0312 family. Type 1 subfamily.

It localises to the periplasm. This chain is UPF0312 protein plu2095, found in Photorhabdus laumondii subsp. laumondii (strain DSM 15139 / CIP 105565 / TT01) (Photorhabdus luminescens subsp. laumondii).